The primary structure comprises 440 residues: Thymidine phosphorylase (440 aa).

The protein belongs to the thymidine/pyrimidine-nucleoside phosphorylase family. Homodimer.

The catalysed reaction is thymidine + phosphate = 2-deoxy-alpha-D-ribose 1-phosphate + thymine. It functions in the pathway pyrimidine metabolism; dTMP biosynthesis via salvage pathway; dTMP from thymine: step 1/2. The enzymes which catalyze the reversible phosphorolysis of pyrimidine nucleosides are involved in the degradation of these compounds and in their utilization as carbon and energy sources, or in the rescue of pyrimidine bases for nucleotide synthesis. The sequence is that of Thymidine phosphorylase from Shigella flexneri serotype 5b (strain 8401).